We begin with the raw amino-acid sequence, 349 residues long: N-acetyltaurine hydrolase (349 aa).

The a divalent metal cation site is built by H26, H28, E169, H201, H230, and D298.

This sequence belongs to the metallo-dependent hydrolases superfamily. Phosphotriesterase family. A divalent metal cation is required as a cofactor.

It localises to the cytoplasm. It is found in the cytosol. It catalyses the reaction N-acetyltaurine + H2O = taurine + acetate. The enzyme catalyses N-propanoyltaurine + H2O = propanoate + taurine. The catalysed reaction is N-acetyl-L-methionine + H2O = L-methionine + acetate. It carries out the reaction N-acetyl-L-isoleucine + H2O = L-isoleucine + acetate. It catalyses the reaction N-acetyl-L-leucine + H2O = L-leucine + acetate. The enzyme catalyses N-acetyl-L-valine + H2O = L-valine + acetate. Functionally, N-acetyltaurine hydrolase that catalyzes the hydrolysis of N-acetyltaurine into taurine and acetate. PTER also acts on other N-acetyl amino acids (Met, Ile, Leu, Val) and N-propionyltaurine, but at lower rates. The sequence is that of N-acetyltaurine hydrolase (pter) from Tetraodon nigroviridis (Spotted green pufferfish).